We begin with the raw amino-acid sequence, 181 residues long: MAASVKDRAVLDAIFNPLLPLGDCPQEIIEEELPIENTNEDDVKRAKEYEIQGVEKAEAGDFVGALDCFNKAIDVAPLRASGYNNRAQLSRLRGDNQSAMEDLNKAIELSHEHGAAAAQAYTQRGLLHRLEGNDEAASEDFQHGATLGNAFAKAMTVQLNPYAAMCNKMLAEAIGKLSGHA.

TPR repeat units lie at residues 46–79 (AKEYEIQGVEKAEAGDFVGALDCFNKAIDVAPLR), 81–113 (SGYNNRAQLSRLRGDNQSAMEDLNKAIELSHEH), and 118–151 (AQAYTQRGLLHRLEGNDEAASEDFQHGATLGNAF).

The protein belongs to the TTC36 family.

The sequence is that of Tetratricopeptide repeat protein 36 homolog (ttc36) from Nematostella vectensis (Starlet sea anemone).